The following is a 238-amino-acid chain: tRNA (guanine-N(7)-)-methyltransferase (238 aa).

Glu68, Glu93, Asp120, and Asp143 together coordinate S-adenosyl-L-methionine. Asp143 is an active-site residue. Substrate-binding positions include Lys147, Asp179, and 216–219 (TKFE).

It belongs to the class I-like SAM-binding methyltransferase superfamily. TrmB family.

It carries out the reaction guanosine(46) in tRNA + S-adenosyl-L-methionine = N(7)-methylguanosine(46) in tRNA + S-adenosyl-L-homocysteine. It functions in the pathway tRNA modification; N(7)-methylguanine-tRNA biosynthesis. Catalyzes the formation of N(7)-methylguanine at position 46 (m7G46) in tRNA. The protein is tRNA (guanine-N(7)-)-methyltransferase of Shewanella baltica (strain OS155 / ATCC BAA-1091).